Reading from the N-terminus, the 287-residue chain is Phosphatidylserine decarboxylase proenzyme (287 aa).

Active-site charge relay system; for autoendoproteolytic cleavage activity residues include Asp-90, His-147, and Ser-252. The active-site Schiff-base intermediate with substrate; via pyruvic acid; for decarboxylase activity is Ser-252. Ser-252 carries the pyruvic acid (Ser); by autocatalysis modification.

The protein belongs to the phosphatidylserine decarboxylase family. PSD-B subfamily. Prokaryotic type I sub-subfamily. Heterodimer of a large membrane-associated beta subunit and a small pyruvoyl-containing alpha subunit. Pyruvate serves as cofactor. In terms of processing, is synthesized initially as an inactive proenzyme. Formation of the active enzyme involves a self-maturation process in which the active site pyruvoyl group is generated from an internal serine residue via an autocatalytic post-translational modification. Two non-identical subunits are generated from the proenzyme in this reaction, and the pyruvate is formed at the N-terminus of the alpha chain, which is derived from the carboxyl end of the proenzyme. The autoendoproteolytic cleavage occurs by a canonical serine protease mechanism, in which the side chain hydroxyl group of the serine supplies its oxygen atom to form the C-terminus of the beta chain, while the remainder of the serine residue undergoes an oxidative deamination to produce ammonia and the pyruvoyl prosthetic group on the alpha chain. During this reaction, the Ser that is part of the protease active site of the proenzyme becomes the pyruvoyl prosthetic group, which constitutes an essential element of the active site of the mature decarboxylase.

Its subcellular location is the cell membrane. It carries out the reaction a 1,2-diacyl-sn-glycero-3-phospho-L-serine + H(+) = a 1,2-diacyl-sn-glycero-3-phosphoethanolamine + CO2. It participates in phospholipid metabolism; phosphatidylethanolamine biosynthesis; phosphatidylethanolamine from CDP-diacylglycerol: step 2/2. Catalyzes the formation of phosphatidylethanolamine (PtdEtn) from phosphatidylserine (PtdSer). This is Phosphatidylserine decarboxylase proenzyme from Pseudomonas putida (strain ATCC 700007 / DSM 6899 / JCM 31910 / BCRC 17059 / LMG 24140 / F1).